Consider the following 122-residue polypeptide: Lithostathine (122 aa).

Positions 1–26 are cleaved as a signal peptide; that stretch reads MLPSMSLPSLXWMLLSCLMLLSQVQG. A propeptide spanning residues 27 to 37 is cleaved from the precursor; it reads EDSPADTPSAR. Positions 38-122 constitute a C-type lectin domain; that stretch reads ISCPKGSMAY…LEPNAGGWEW (85 aa). The cysteines at positions 40 and 51 are disulfide-linked.

In terms of assembly, cleaved to give an A chain and a B chain joined by a disulfide bond. As to expression, in pancreatic acinar cells.

Its subcellular location is the secreted. Functionally, might act as an inhibitor of spontaneous calcium carbonate precipitation. The chain is Lithostathine (PTP) from Sus scrofa (Pig).